A 397-amino-acid chain; its full sequence is Pyruvate dehydrogenase E1 component subunit alpha, mitochondrial (397 aa).

Residues histidine 98, tyrosine 124, arginine 125, glycine 173, valine 175, aspartate 204, glycine 205, alanine 206, asparagine 233, and tyrosine 235 each coordinate pyruvate. 8 residues coordinate thiamine diphosphate: tyrosine 124, arginine 125, glycine 173, valine 175, aspartate 204, glycine 205, alanine 206, and asparagine 233. Aspartate 204 provides a ligand contact to Mg(2+). Mg(2+) contacts are provided by asparagine 233 and tyrosine 235. Histidine 299 provides a ligand contact to thiamine diphosphate.

Tetramer of 2 alpha and 2 beta subunits. It depends on thiamine diphosphate as a cofactor. Mg(2+) serves as cofactor.

It is found in the mitochondrion matrix. It carries out the reaction N(6)-[(R)-lipoyl]-L-lysyl-[protein] + pyruvate + H(+) = N(6)-[(R)-S(8)-acetyldihydrolipoyl]-L-lysyl-[protein] + CO2. With respect to regulation, E1 activity is regulated by phosphorylation (inactivation) and dephosphorylation (activation) of the alpha subunit. Functionally, the pyruvate dehydrogenase complex catalyzes the overall conversion of pyruvate to acetyl-CoA and CO(2). It contains multiple copies of three enzymatic components: pyruvate dehydrogenase (E1), dihydrolipoamide acetyltransferase (E2) and lipoamide dehydrogenase (E3). The sequence is that of Pyruvate dehydrogenase E1 component subunit alpha, mitochondrial from Pisum sativum (Garden pea).